The sequence spans 100 residues: Small ribosomal subunit protein bS20 (100 aa).

Basic residues predominate over residues 1–22 (MASGKPKKKNPRLASGRKRARQ). Positions 1-26 (MASGKPKKKNPRLASGRKRARQGLKL) are disordered.

The protein belongs to the bacterial ribosomal protein bS20 family.

Its function is as follows. Binds directly to 16S ribosomal RNA. In Acidovorax ebreus (strain TPSY) (Diaphorobacter sp. (strain TPSY)), this protein is Small ribosomal subunit protein bS20.